The following is a 559-amino-acid chain: Transmembrane E3 ubiquitin-protein ligase FLY2 (559 aa).

The first 29 residues, Met-1–Gly-29, serve as a signal peptide directing secretion. At Leu-30–Asn-259 the chain is on the lumenal side. A helical transmembrane segment spans residues Lys-260–Ile-280. Topologically, residues Arg-281 to Lys-294 are cytoplasmic. The helical transmembrane segment at Val-295–Leu-315 threads the bilayer. Residues Thr-316 to Gly-318 lie on the Lumenal side of the membrane. A helical transmembrane segment spans residues Ile-319–Phe-339. Over Ser-340–Leu-370 the chain is Cytoplasmic. Residues Ser-371–Phe-391 form a helical membrane-spanning segment. The Lumenal portion of the chain corresponds to His-392–Tyr-394. The helical transmembrane segment at Met-395–Val-415 threads the bilayer. Residues Arg-416–His-423 are Cytoplasmic-facing. Residues Pro-424–Cys-444 traverse the membrane as a helical segment. Topologically, residues Pro-445–Cys-458 are lumenal. Residues Val-459 to Gly-479 traverse the membrane as a helical segment. Over Ser-480–Ala-559 the chain is Cytoplasmic. The RING-type; atypical zinc finger occupies Cys-509–Arg-553.

Highly expressed in stems. Expressed in root xylem and seed coat.

It localises to the endomembrane system. It catalyses the reaction S-ubiquitinyl-[E2 ubiquitin-conjugating enzyme]-L-cysteine + [acceptor protein]-L-lysine = [E2 ubiquitin-conjugating enzyme]-L-cysteine + N(6)-ubiquitinyl-[acceptor protein]-L-lysine.. Its pathway is protein modification; protein ubiquitination. Functionally, E3 ubiquitin-protein ligase that may be involved in xylem development. The chain is Transmembrane E3 ubiquitin-protein ligase FLY2 from Arabidopsis thaliana (Mouse-ear cress).